We begin with the raw amino-acid sequence, 249 residues long: Derlin-2.1 (249 aa).

At 1–21 (MAQAVEEWYRQMPIITRSYLT) the chain is on the cytoplasmic side. The chain crosses the membrane as a helical span at residues 22–42 (AAVVTTVGCTLEIISPYHLYL). The Lumenal portion of the chain corresponds to 43–96 (NPKLVVQHYEIWRLVTNFLYFRKMDLDFLFHMFFLARYCKLLEENSFRGRTADF). Residues 97–117 (FYMLLFGATVLTSIVLIGGMI) form a helical membrane-spanning segment. Topologically, residues 118–122 (PYISE) are cytoplasmic. The helical transmembrane segment at 123 to 143 (TFARILFLSNSLTFMMVYVWS) threads the bilayer. The Lumenal portion of the chain corresponds to 144–152 (KHNPFIHMS). A helical membrane pass occupies residues 153–173 (FLGLFTFTAAYLPWVLLGFSI). Over 174 to 249 (LVGSSTWVDL…GAMGLDPQAQ (76 aa)) the chain is Cytoplasmic.

Belongs to the derlin family. Expressed in roots, stalks, leaves, embryo and endosperm.

The protein resides in the endoplasmic reticulum membrane. Its function is as follows. May be involved in the degradation process of specific misfolded endoplasmic reticulum (ER) luminal proteins. The polypeptide is Derlin-2.1 (DER2.1) (Zea mays (Maize)).